Here is a 647-residue protein sequence, read N- to C-terminus: Pumilio homolog 3 (647 aa).

Over residues 1–10 (MEVKGKKKFT) the composition is skewed to basic residues. Residues 1–123 (MEVKGKKKFT…KKKKELKQSR (123 aa)) are disordered. N6-acetyllysine is present on K33. A compositionally biased stretch (basic residues) spans 59 to 68 (PGKKGVKQFK). Residues 102 to 123 (SGAKKPKWDDFKKKKKELKQSR) are compositionally biased toward basic and acidic residues. Residues 105–117 (KKPKWDDFKKKKK) carry the Nuclear localization signal motif. The 368-residue stretch at 142–509 (ESLRRKDCDK…VVLDKSACVL (368 aa)) folds into the PUM-HD domain. Pumilio repeat units follow at residues 176-211 (HDST…LSKA), 212-247 (KYSR…MLRH), 248-276 (SEAS…ELYG), 288-324 (PTLD…VIKH), 325-360 (SLVH…LAHT), 361-396 (HDGA…VANG), 397-434 (QYSH…IVND), 435-503 (KYGR…VVLD), 504-550 (KSAC…VAEH), 551-595 (PAGH…WASI), and 596-635 (NRGA…KSSS).

In terms of assembly, interacts with PARP1 (via catalytic domain). In the adult eye, expressed primarily in retinal ganglion cells and, to a lesser extent, in the pigmented cells.

The protein resides in the nucleus. Its subcellular location is the nucleolus. It localises to the nucleoplasm. The protein localises to the chromosome. Functionally, inhibits the poly(ADP-ribosyl)ation activity of PARP1 and the degradation of PARP1 by CASP3 following genotoxic stress. Binds to double-stranded RNA or DNA without sequence specificity. Involved in development of the eye and of primordial germ cells. The polypeptide is Pumilio homolog 3 (Mus musculus (Mouse)).